Consider the following 340-residue polypeptide: Ketol-acid reductoisomerase (NADP(+)) (340 aa).

The 180-residue stretch at Val-3–Thr-182 folds into the KARI N-terminal Rossmann domain. Residues Tyr-26 to Gln-29, Arg-49, Ser-53, and Asp-83 to Gln-86 each bind NADP(+). Residue His-108 is part of the active site. Gly-134 is a binding site for NADP(+). A KARI C-terminal knotted domain is found at Thr-183 to Val-328. Residues Asp-191, Glu-195, Glu-227, and Glu-231 each coordinate Mg(2+). Residue Ser-252 participates in substrate binding.

This sequence belongs to the ketol-acid reductoisomerase family. Requires Mg(2+) as cofactor.

The enzyme catalyses (2R)-2,3-dihydroxy-3-methylbutanoate + NADP(+) = (2S)-2-acetolactate + NADPH + H(+). It carries out the reaction (2R,3R)-2,3-dihydroxy-3-methylpentanoate + NADP(+) = (S)-2-ethyl-2-hydroxy-3-oxobutanoate + NADPH + H(+). It functions in the pathway amino-acid biosynthesis; L-isoleucine biosynthesis; L-isoleucine from 2-oxobutanoate: step 2/4. Its pathway is amino-acid biosynthesis; L-valine biosynthesis; L-valine from pyruvate: step 2/4. In terms of biological role, involved in the biosynthesis of branched-chain amino acids (BCAA). Catalyzes an alkyl-migration followed by a ketol-acid reduction of (S)-2-acetolactate (S2AL) to yield (R)-2,3-dihydroxy-isovalerate. In the isomerase reaction, S2AL is rearranged via a Mg-dependent methyl migration to produce 3-hydroxy-3-methyl-2-ketobutyrate (HMKB). In the reductase reaction, this 2-ketoacid undergoes a metal-dependent reduction by NADPH to yield (R)-2,3-dihydroxy-isovalerate. In Streptococcus mutans serotype c (strain ATCC 700610 / UA159), this protein is Ketol-acid reductoisomerase (NADP(+)).